The primary structure comprises 463 residues: uncharacterized protein (463 aa).

This is an uncharacterized protein from Ostreid herpesvirus 1 (isolate France) (OsHV-1).